The following is a 373-amino-acid chain: 2-aminoethylphosphonate--pyruvate transaminase (373 aa).

Lys191 is subject to N6-(pyridoxal phosphate)lysine.

The protein belongs to the class-V pyridoxal-phosphate-dependent aminotransferase family. PhnW subfamily. In terms of assembly, homodimer. The cofactor is pyridoxal 5'-phosphate.

The enzyme catalyses (2-aminoethyl)phosphonate + pyruvate = phosphonoacetaldehyde + L-alanine. Functionally, involved in phosphonate degradation. In Burkholderia ambifaria (strain MC40-6), this protein is 2-aminoethylphosphonate--pyruvate transaminase.